The chain runs to 653 residues: Macrolide export ATP-binding/permease protein MacB (653 aa).

The ABC transporter domain maps to 6-244 (LALSHICREF…AAASLPADKP (239 aa)). An ATP-binding site is contributed by 42 to 49 (GSSGSGKS). 4 helical membrane-spanning segments follow: residues 277-297 (FLTM…VALG), 526-546 (LAFL…IGVM), 587-607 (LGGI…NLLL), and 617-637 (FSIG…GYFP).

Belongs to the ABC transporter superfamily. Macrolide exporter (TC 3.A.1.122) family. As to quaternary structure, homodimer.

It localises to the cell inner membrane. In terms of biological role, non-canonical ABC transporter that contains transmembrane domains (TMD), which form a pore in the inner membrane, and an ATP-binding domain (NBD), which is responsible for energy generation. Confers resistance against macrolides. The chain is Macrolide export ATP-binding/permease protein MacB from Bradyrhizobium diazoefficiens (strain JCM 10833 / BCRC 13528 / IAM 13628 / NBRC 14792 / USDA 110).